Here is a 171-residue protein sequence, read N- to C-terminus: Adenine phosphoribosyltransferase (171 aa).

This sequence belongs to the purine/pyrimidine phosphoribosyltransferase family. As to quaternary structure, homodimer.

The protein resides in the cytoplasm. It catalyses the reaction AMP + diphosphate = 5-phospho-alpha-D-ribose 1-diphosphate + adenine. It participates in purine metabolism; AMP biosynthesis via salvage pathway; AMP from adenine: step 1/1. Functionally, catalyzes a salvage reaction resulting in the formation of AMP, that is energically less costly than de novo synthesis. The polypeptide is Adenine phosphoribosyltransferase (Pelotomaculum thermopropionicum (strain DSM 13744 / JCM 10971 / SI)).